A 382-amino-acid chain; its full sequence is Pyrimidine monooxygenase RutA (382 aa).

Residues 68 to 69, asparagine 134, glutamate 143, 159 to 160, and serine 209 each bind FMN; these read IK and RY.

The protein belongs to the NtaA/SnaA/DszA monooxygenase family. RutA subfamily.

It carries out the reaction uracil + FMNH2 + NADH + O2 = (Z)-3-ureidoacrylate + FMN + NAD(+) + H2O + H(+). The enzyme catalyses thymine + FMNH2 + NADH + O2 = (Z)-2-methylureidoacrylate + FMN + NAD(+) + H2O + H(+). Its function is as follows. Catalyzes the pyrimidine ring opening between N-3 and C-4 by an unusual flavin hydroperoxide-catalyzed mechanism, adding oxygen atoms in the process to yield ureidoacrylate peracid, that immediately reacts with FMN forming ureidoacrylate and FMN-N(5)-oxide. The FMN-N(5)-oxide reacts spontaneously with NADH to produce FMN. Requires the flavin reductase RutF to regenerate FMN in vivo. This Escherichia coli (strain K12 / MC4100 / BW2952) protein is Pyrimidine monooxygenase RutA.